A 422-amino-acid chain; its full sequence is MSKKITSIRGMNDILPEQTGLWQWLEAKVGAVLASYGYQEIRMPIVEQTDLFKRSIGEVTDIVEKEMYTFDDRNGDSLTLRPEGTASCVRACEQHGLLYNQTQRLWYAGPMFRHERPQAGRYRQFHQIGVETFGMTGPDIDAEVILLTARLWKALGLEDKVVLELNSLGDSADRARYRDALVDYLKAHFDDLDGDSQKRLERSPLRVLDSKDTGTREVLKGAPQLADYLNDEAVAHFEGLKALLDASGIAYKVNPYLVRGLDYYGKTVFEWVTDALGAQGTVCAGGRYDGLVEQLGGKPTPAVGFAMGIERLILLIEQERPELSAPVDVYVMAMGDVLAPTMALSEHLRDALPGRAIQLHCGGGSFKSQMKKADRSGAAVGLIMGEDELASGVVTVKPLRGQGEQVQVAQGDVANAVTSFLE.

This sequence belongs to the class-II aminoacyl-tRNA synthetase family. In terms of assembly, homodimer.

It localises to the cytoplasm. It catalyses the reaction tRNA(His) + L-histidine + ATP = L-histidyl-tRNA(His) + AMP + diphosphate + H(+). The sequence is that of Histidine--tRNA ligase from Alcanivorax borkumensis (strain ATCC 700651 / DSM 11573 / NCIMB 13689 / SK2).